The primary structure comprises 155 residues: Photosystem II extrinsic protein V (155 aa).

An N-terminal signal peptide occupies residues 1 to 20 (MFVKMIGWLVLFLFAHQTWA). Positions 50, 53, 54, and 105 each coordinate heme c.

The protein belongs to the cytochrome c family. PsbV subfamily. In terms of assembly, PSII is composed of 1 copy each of membrane proteins PsbA, PsbB, PsbC, PsbD, PsbE, PsbF, PsbH, PsbI, PsbJ, PsbK, PsbL, PsbM, PsbT, PsbY, PsbZ, Psb30/Ycf12, at least 3 peripheral proteins of the oxygen-evolving complex and a large number of cofactors. It forms dimeric complexes. The extrinsic subunits in red algae are PsbO (OEC33), PsbQ', cytochrome c-550 and PsbU. Heme c is required as a cofactor.

Its subcellular location is the plastid. It is found in the chloroplast thylakoid membrane. Its function is as follows. One of the extrinsic, lumenal subunits of photosystem II (PSII). PSII is a light-driven water plastoquinone oxidoreductase, using light energy to abstract electrons from H(2)O, generating a proton gradient subsequently used for ATP formation. The extrinsic proteins stabilize the structure of photosystem II oxygen-evolving complex (OEC), the ion environment of oxygen evolution and protect the OEC against heat-induced inactivation. Unlike the T.vulcanus ortholog, it does not bind by itself to PSII, but requires all extrinsic members of the OEC. The polypeptide is Photosystem II extrinsic protein V (Cyanidium caldarium (Red alga)).